A 28-amino-acid chain; its full sequence is Unknown protein from spot 154 of 2D-PAGE of etiolated coleoptile (28 aa).

The sequence is that of Unknown protein from spot 154 of 2D-PAGE of etiolated coleoptile from Zea mays (Maize).